The sequence spans 804 residues: Serine/threonine-protein kinase ATG1 (804 aa).

Residues 12 to 308 enclose the Protein kinase domain; that stretch reads FTIGPEIGRG…FQEFFNDPLI (297 aa). Residues 18-26 and Lys41 each bind ATP; that span reads IGRGSFANV. Catalysis depends on Asp158, which acts as the Proton acceptor. 3 disordered regions span residues 339–364, 395–415, and 455–506; these read TSPP…ERAP, INKS…KGAR, and PSPH…MPIS. The span at 404–415 shows a compositional bias: basic and acidic residues; it reads TVKDGQIKKGAR. The segment covering 462 to 495 has biased composition (polar residues); it reads NEHSAANPSGPTETQTQRRFSPSSRTSSIGSNRR.

The protein belongs to the protein kinase superfamily. Ser/Thr protein kinase family. APG1/unc-51/ULK1 subfamily. In terms of assembly, homodimer. Forms a ternary complex with ATG13 and ATG17.

It is found in the cytoplasm. Its subcellular location is the preautophagosomal structure membrane. The catalysed reaction is L-seryl-[protein] + ATP = O-phospho-L-seryl-[protein] + ADP + H(+). It catalyses the reaction L-threonyl-[protein] + ATP = O-phospho-L-threonyl-[protein] + ADP + H(+). Its function is as follows. Serine/threonine protein kinase involved in the cytoplasm to vacuole transport (Cvt) and found to be essential in autophagy, where it is required for the formation of autophagosomes. Involved in the clearance of protein aggregates which cannot be efficiently cleared by the proteasome. Required for selective autophagic degradation of the nucleus (nucleophagy) as well as for mitophagy which contributes to regulate mitochondrial quantity and quality by eliminating the mitochondria to a basal level to fulfill cellular energy requirements and preventing excess ROS production. Also involved in endoplasmic reticulum-specific autophagic process, in selective removal of ER-associated degradation (ERAD) substrates. Plays a key role in ATG9 and ATG23 cycling through the pre-autophagosomal structure and is necessary to promote ATG18 binding to ATG9 through phosphorylation of ATG9. Catalyzes phosphorylation of ATG4, decreasing the interaction between ATG4 and ATG8 and impairing deconjugation of PE-conjugated forms of ATG8. The sequence is that of Serine/threonine-protein kinase ATG1 from Pichia angusta (Yeast).